Reading from the N-terminus, the 544-residue chain is Chaperonin GroEL 1 (544 aa).

ATP contacts are provided by residues 29-32 (TLGP), 86-90 (DGTTT), Gly413, 482-484 (NVL), and Asp498.

Belongs to the chaperonin (HSP60) family. As to quaternary structure, forms a cylinder of 14 subunits composed of two heptameric rings stacked back-to-back. Interacts with the co-chaperonin GroES.

It is found in the cytoplasm. The enzyme catalyses ATP + H2O + a folded polypeptide = ADP + phosphate + an unfolded polypeptide.. Functionally, together with its co-chaperonin GroES, plays an essential role in assisting protein folding. The GroEL-GroES system forms a nano-cage that allows encapsulation of the non-native substrate proteins and provides a physical environment optimized to promote and accelerate protein folding. The sequence is that of Chaperonin GroEL 1 from Chloroflexus aurantiacus (strain ATCC 29366 / DSM 635 / J-10-fl).